A 157-amino-acid chain; its full sequence is Probable succinate transporter subunit YjjB (157 aa).

4 helical membrane-spanning segments follow: residues 8–28 (LALM…AMVF), 55–75 (AGFN…SIGI), 87–107 (VFTV…TAMI), and 129–149 (FLKA…PGLW).

This sequence belongs to the ThrE exporter (TC 2.A.79) family. In terms of assembly, the transporter is composed of YjjB and YjjP.

It localises to the cell inner membrane. Involved in succinate export with YjjP. Both proteins are required for export. The sequence is that of Probable succinate transporter subunit YjjB from Salmonella agona (strain SL483).